The chain runs to 1434 residues: MYSSSNTFLGGANSARPGQPLMQQSPYSQQFASGQQQQPPQQGGFAPQPTGYGPQMSSFGASQLQPQATGFPAGQLQPQFTGFPGAVPQSQQTGFQPPVQQAQITGYPAQSQPPQFQVPASTGLPVRQAPRTSSEIADSFQDVAGMAPPPPPKASASKIPNIRLSFITAQDQAKFEQLFKSAVGDNQTMSGDKAKELLLRSKLPGNDLSKIWVLSDSTKSGQLFFPEFALAMYLCNLRITGRELPSALPEKIRNEVSSMVDIISFQVPDTQPEPAVRTNVPNFDAPLLENKSAPPAPQQPQPQQPSNAQLLTQLTAQPTGFPQPTGFQQSQSPFPGQNSALAPQATGFPGQPQQLQPQPTGFMTNPQPTGYNGPRPPMPPMPTGFGSNLSPAQTGGVSALAAQPTGIPGQWGFVNAPATGLPNIEALKQQLMPQPGREGGFSAVGLSGNAHIPWAITKEEKKIYDDLFRAWDGFRKGFIGGDTAIEIMGQSGLDRSDLERIWTLADPNNRGRLNMDEFAVAMHLIYRKLNGYPVPNRLPPELVPPSTRNLNDSIGTIKSMLSQDAEMSPGGGRKDATLFKNNDEAAAGYRSSARRRVGNNGRTPSPAASQASEEELSVDQLKKKIREAQIMLDAVDFQDENQAEEDDALDRRDRREAESLMDRIRRVQDDIDTHPDASFRNLDTGAERRSLRRQLQAYEDQVPQVASEVRRVEREIAEVRLELFRLKDAKEHPNSASSIVGTGPGGTVTEADRIKARARARMQARAAELAGRPVPASQDDDGAATRRLEAENATVKAERERNETMTRDVEESVREFARSLEDSLKDGGESSTREHERRRWEDALGVEDVVRDFIYDLKRSSRTAHVRKEEQQRAADTQSQRSRYNESPLGGAAGSQHSPTPTGSVVSAGSTHEDRVAAARERAQKRIAERMAAAGLKPHSDAGETLLQRQEREKKEREERLRRAEEEDAKREQERQRRLAEEQGGPTAQSAKPASKKPPPAPPSRKGRTDSAGQAEAKKAREEAAKVEQSTREQAIREEQQAQEEETARLEAAAREREAEFLKEKEAQEARLAALQEQVRQGKIKKQEEKRRKEEAARAAKEQEARLATQRAELEMAKERERQLQLELEGLDESSSDEEGPINITPQDSTPTQSQVLPAVDTAVPPPAPAPAPELDVVTSPAESASSHAAPTSISPEAESKNPYFKRISQSDSQVPPPPPAPQPAAPKAESQSTNPFHRLAQQQESSKPAFTAPGPLERKSRVRPEVDDDWSAAGSDFDDSSDDDDERPGGGSAKQLASILFGTMAPPRPLSAMDDKTPSKSSTPVQDSPATPTPPTEAAESPAAVPPPPPPPPAPAPAVPSPSAAAPPPPPPAPSMAPPVPPPGVPPPPAPPAAPTGGAGRGALLASIQAGTGLRKVQTNDRSTSSSAGRVLD.

A disordered region spans residues 1–133; the sequence is MYSSSNTFLG…LPVRQAPRTS (133 aa). Residues 28-49 show a composition bias toward low complexity; sequence SQQFASGQQQQPPQQGGFAPQP. Composition is skewed to polar residues over residues 55 to 68 and 88 to 120; these read QMSS…QPQA and PQSQ…QVPA. An EH 1 domain is found at 171 to 259; it reads DQAKFEQLFK…EKIRNEVSSM (89 aa). An EF-hand 1 domain is found at 203-238; sequence LPGNDLSKIWVLSDSTKSGQLFFPEFALAMYLCNLR. The disordered stretch occupies residues 271 to 380; the sequence is QPEPAVRTNV…YNGPRPPMPP (110 aa). Residues 294-303 show a composition bias toward pro residues; the sequence is PPAPQQPQPQ. Residues 306–341 are compositionally biased toward polar residues; that stretch reads SNAQLLTQLTAQPTGFPQPTGFQQSQSPFPGQNSAL. Positions 349 to 359 are enriched in low complexity; that stretch reads PGQPQQLQPQP. Residues 361–370 show a composition bias toward polar residues; the sequence is GFMTNPQPTG. Residues 460–549 enclose the EH 2 domain; the sequence is EKKIYDDLFR…PELVPPSTRN (90 aa). An EF-hand 2 domain is found at 493–528; it reads LDRSDLERIWTLADPNNRGRLNMDEFAVAMHLIYRK. Disordered stretches follow at residues 587–615, 768–814, 862–1063, and 1078–1434; these read AGYR…SEEE, ELAG…ESVR, RTAH…EFLK, and QVRQ…RVLD. A compositionally biased stretch (polar residues) spans 600-611; sequence NGRTPSPAASQA. Positions 607–815 form a coiled coil; sequence AASQASEEEL…TRDVEESVRE (209 aa). The span at 783–814 shows a compositional bias: basic and acidic residues; that stretch reads AATRRLEAENATVKAERERNETMTRDVEESVR. Residues 895-910 are compositionally biased toward polar residues; it reads SQHSPTPTGSVVSAGS. Basic and acidic residues-rich tracts occupy residues 911 to 929, 949 to 981, 1016 to 1063, 1085 to 1105, and 1112 to 1124; these read THED…RIAE, RQER…RLAE, EAKK…EFLK, KKQE…EQEA, and AELE…ERQL. Residues 941–1137 are a coiled coil; the sequence is DAGETLLQRQ…LEGLDESSSD (197 aa). Positions 1129–1140 are enriched in acidic residues; sequence EGLDESSSDEEG. A compositionally biased stretch (polar residues) spans 1144-1155; sequence ITPQDSTPTQSQ. Positions 1173 to 1193 are enriched in low complexity; that stretch reads PELDVVTSPAESASSHAAPTS. The segment covering 1215–1225 has biased composition (pro residues); it reads VPPPPPAPQPA. The span at 1257–1266 shows a compositional bias: basic and acidic residues; it reads LERKSRVRPE. A compositionally biased stretch (acidic residues) spans 1267–1287; it reads VDDDWSAAGSDFDDSSDDDDE. Residues 1320 to 1329 show a composition bias toward polar residues; the sequence is SKSSTPVQDS. Over residues 1345–1395 the composition is skewed to pro residues; the sequence is AVPPPPPPPPAPAPAVPSPSAAAPPPPPPAPSMAPPVPPPGVPPPPAPPAA. The 18-residue stretch at 1401 to 1418 folds into the WH2 domain; the sequence is GRGALLASIQAGTGLRKV. Residues 1421 to 1434 are compositionally biased toward polar residues; it reads NDRSTSSSAGRVLD.

This sequence belongs to the PAN1 family. Component of the PAN1 actin cytoskeleton-regulatory complex.

The protein resides in the cell membrane. It localises to the endosome membrane. It is found in the cytoplasm. The protein localises to the cytoskeleton. Its subcellular location is the actin patch. Component of the PAN1 actin cytoskeleton-regulatory complex required for the internalization of endosomes during actin-coupled endocytosis. The complex links the site of endocytosis to the cell membrane-associated actin cytoskeleton. Mediates uptake of external molecules and vacuolar degradation of plasma membrane proteins. Plays a role in the proper organization of the cell membrane-associated actin cytoskeleton and promotes its destabilization. This chain is Actin cytoskeleton-regulatory complex protein pan1 (pan1), found in Aspergillus niger (strain ATCC MYA-4892 / CBS 513.88 / FGSC A1513).